We begin with the raw amino-acid sequence, 108 residues long: Class I hydrophobin hgfII (108 aa).

An N-terminal signal peptide occupies residues 1–19; the sequence is MFSRIAAVSFLALPLLAAA. Disulfide bonds link Cys-28–Cys-89, Cys-35–Cys-83, Cys-36–Cys-69, and Cys-90–Cys-103. N-linked (GlcNAc...) asparagine glycosylation occurs at Asn-92.

It belongs to the fungal hydrophobin family. As to quaternary structure, self-assembles to form functional amyloid fibrils called rodlets with a diameter of 15-30 nm. Self-assembly into fibrillar rodlets occurs spontaneously at hydrophobic:hydrophilic interfaces and the rodlets further associate laterally to form amphipathic monolayers. As to expression, highky expressed in hyphae cultured in liquid medium.

It is found in the secreted. It localises to the cell wall. Aerial growth, conidiation, and dispersal of filamentous fungi in the environment rely upon a capability of their secreting small amphipathic proteins called hydrophobins (HPBs) with low sequence identity. Class I can self-assemble into an outermost layer of rodlet bundles on aerial cell surfaces, conferring cellular hydrophobicity that supports fungal growth, development and dispersal; whereas Class II form highly ordered films at water-air interfaces through intermolecular interactions but contribute nothing to the rodlet structure. HgfII is a class I hydrophobin that is involved in cell surface hydrophobicity and might play a key role during the growth and development of hyphae cultured in liquid medium. The polypeptide is Class I hydrophobin hgfII (Grifola frondosa (Maitake)).